Reading from the N-terminus, the 339-residue chain is Ketol-acid reductoisomerase (NADP(+)) (339 aa).

The KARI N-terminal Rossmann domain occupies 1 to 182 (MRVYYDRDAD…GGGRAGIIET (182 aa)). NADP(+)-binding positions include 24 to 27 (YGSQ), R48, S51, T53, and 83 to 86 (DELQ). Residue H108 is part of the active site. NADP(+) is bound at residue G134. Residues 183-328 (SFKEECETDL…AKLREMMPWI (146 aa)) enclose the KARI C-terminal knotted domain. D191, E195, E227, and E231 together coordinate Mg(2+). S252 contacts substrate.

It belongs to the ketol-acid reductoisomerase family. Mg(2+) serves as cofactor.

It catalyses the reaction (2R)-2,3-dihydroxy-3-methylbutanoate + NADP(+) = (2S)-2-acetolactate + NADPH + H(+). The catalysed reaction is (2R,3R)-2,3-dihydroxy-3-methylpentanoate + NADP(+) = (S)-2-ethyl-2-hydroxy-3-oxobutanoate + NADPH + H(+). The protein operates within amino-acid biosynthesis; L-isoleucine biosynthesis; L-isoleucine from 2-oxobutanoate: step 2/4. Its pathway is amino-acid biosynthesis; L-valine biosynthesis; L-valine from pyruvate: step 2/4. In terms of biological role, involved in the biosynthesis of branched-chain amino acids (BCAA). Catalyzes an alkyl-migration followed by a ketol-acid reduction of (S)-2-acetolactate (S2AL) to yield (R)-2,3-dihydroxy-isovalerate. In the isomerase reaction, S2AL is rearranged via a Mg-dependent methyl migration to produce 3-hydroxy-3-methyl-2-ketobutyrate (HMKB). In the reductase reaction, this 2-ketoacid undergoes a metal-dependent reduction by NADPH to yield (R)-2,3-dihydroxy-isovalerate. The sequence is that of Ketol-acid reductoisomerase (NADP(+)) from Rhodopseudomonas palustris (strain BisB5).